The chain runs to 101 residues: Small ribosomal subunit protein bS6 (101 aa).

The protein belongs to the bacterial ribosomal protein bS6 family. Part of the 30S ribosomal subunit. Forms a tight heterodimer with protein bS18.

In terms of biological role, located on the outer edge of the platform on the body of the 30S subunit. This chain is Small ribosomal subunit protein bS6 (rpsF), found in Thermus thermophilus (strain ATCC BAA-163 / DSM 7039 / HB27).